The primary structure comprises 608 residues: Serine/threonine-protein kinase ROP17 (608 aa).

Positions 1–21 (MELVLCFVIITISGVIRESSA) are cleaved as a signal peptide. Asn-76 is a glycosylation site (N-linked (GlcNAc...) asparagine). One can recognise a Protein kinase domain in the interval 283–579 (LKKRGFLGGG…QQALEQFSLL (297 aa)). Residues 289-297 (LGGGGFGLV) and Lys-312 contribute to the ATP site. The Proton acceptor role is filled by Asp-436.

The protein belongs to the protein kinase superfamily. Ser/Thr protein kinase family. Interacts with ROP5; interaction with ROP5 does not affect kinase activity. Interacts with human BCL2; the interaction probably promotes BCL2 phosphorylation and degradation.

It localises to the secreted. It is found in the cytoplasmic vesicle. The protein localises to the secretory vesicle. Its subcellular location is the rhoptry. The protein resides in the parasitophorous vacuole membrane. The catalysed reaction is L-threonyl-[protein] + ATP = O-phospho-L-threonyl-[protein] + ADP + H(+). It carries out the reaction L-seryl-[protein] + ATP = O-phospho-L-seryl-[protein] + ADP + H(+). Its function is as follows. Protein kinase. Virulence factor. Promotes migration of Toxoplasma-infected macrophages through collagen matrix, facilitating parasite transport through tissues and systemic dissemination. Plays a role in the translocation of dense granule effectors, such as GRA16 and GRA24, across the parasitophorous vacuole membrane in Toxoplasma-infected host cells. Phosphorylates mouse IRGB6 (TGTP1/TGTP2), an immunity-related GTPase (IRG) that protects mice from infection by certain intracellular pathogens; the phosphorylation leads to the disassembly of IRGB6 polymers into monomers and dimers. May modulate gene expression in human cells. Promotes autophagy in human cells via modulation of the BCL2-BECN1 pathway. The chain is Serine/threonine-protein kinase ROP17 from Toxoplasma gondii.